The sequence spans 322 residues: Germ cell-specific gene 1-like protein (322 aa).

Over 1-8 the chain is Cytoplasmic; it reads MKTSRRGR. Residues 9–29 form a helical membrane-spanning segment; the sequence is ALLAVALNLLALLFATTAFLT. Topologically, residues 30–122 are extracellular; the sequence is TYWCQGTQRV…FIDLAPASEK (93 aa). The chain crosses the membrane as a helical span at residues 123-143; sequence GVLWLSVVSEVLYILLLVVGF. Topologically, residues 144–163 are cytoplasmic; it reads SLMCLELVHSSSVIDGLKLN. Residues 164–184 form a helical membrane-spanning segment; the sequence is AFAAVFTVLSGLLGMVAHMMY. At 185 to 207 the chain is on the extracellular side; sequence TQVFQVTVSLGPEDWRPHSWDYG. Residues 208–228 form a helical membrane-spanning segment; the sequence is WSFCLAWGSFTCCMAASVTTL. Residues 229–322 are Cytoplasmic-facing; it reads NSYTKTVIEF…RQCWVLGHWV (94 aa). Ser-274 is subject to Phosphoserine.

This sequence belongs to the GSG1 family. In terms of assembly, component of the inner core of AMPAR complexes. AMPAR complexes consist of an inner core made of 4 pore-forming GluA/GRIA proteins (GRIA1, GRIA2, GRIA3 and GRIA4) and 4 major auxiliary subunits arranged in a twofold symmetry. One of the two pairs of distinct binding sites is occupied either by CNIH2, CNIH3 or CACNG2, CACNG3. The other harbors CACNG2, CACNG3, CACNG4, CACNG8 or GSG1L. This inner core of AMPAR complexes is complemented by outer core constituents binding directly to the GluA/GRIA proteins at sites distinct from the interaction sites of the inner core constituents. Outer core constituents include at least PRRT1, PRRT2, CKAMP44/SHISA9, FRRS1L and NRN1. The proteins of the inner and outer core serve as a platform for other, more peripherally associated AMPAR constituents. Alone or in combination, these auxiliary subunits control the gating and pharmacology of the AMPAR complexes and profoundly impact their biogenesis and protein processing. As to expression, expressed in the brain, including hippocampus (at protein level).

The protein localises to the cell membrane. Its subcellular location is the synapse. Its function is as follows. As a component of the inner core of AMPAR complexes, modifies AMPA receptor (AMPAR) gating. In Mus musculus (Mouse), this protein is Germ cell-specific gene 1-like protein (Gsg1l).